The primary structure comprises 113 residues: UPF0342 protein MGAS2096_Spy0691 (113 aa).

The protein belongs to the UPF0342 family.

The chain is UPF0342 protein MGAS2096_Spy0691 from Streptococcus pyogenes serotype M12 (strain MGAS2096).